The primary structure comprises 116 residues: Small ribosomal subunit protein bS16 (116 aa).

It belongs to the bacterial ribosomal protein bS16 family.

This Chlamydia trachomatis serovar L2 (strain ATCC VR-902B / DSM 19102 / 434/Bu) protein is Small ribosomal subunit protein bS16.